A 546-amino-acid chain; its full sequence is Alpha-isocomene synthase (546 aa).

Mg(2+) is bound by residues D299, D303, D443, and E451. The short motif at 299 to 303 (DDTYD) is the DDXXD motif element.

The protein belongs to the terpene synthase family. Tpsa subfamily. Requires Mg(2+) as cofactor. It depends on Mn(2+) as a cofactor. Highly expressed in roots, lower levels in stems and leaves and detected in disk florets, but not in ray florets.

It catalyses the reaction (2E,6E)-farnesyl diphosphate = (-)-alpha-isocomene + diphosphate. The protein operates within secondary metabolite biosynthesis; terpenoid biosynthesis. Functionally, sesquiterpene synthase involved in the biosynthesis of alpha-isocomene as the major product and detectable amounts of beta-caryophyllene, beta-isocomene, silphinene and modeph-2-ene. Produces exclusively the (-)-(E)-beta caryophyllene enantiomer. This is Alpha-isocomene synthase from Matricaria chamomilla var. recutita (German chamomile).